The following is a 608-amino-acid chain: Albumin (608 aa).

A signal peptide spans 1 to 18; it reads MKWVTFLLLLFVSDSAFS. A propeptide spanning residues 19–24 is cleaved from the precursor; it reads RGLFRR. 3 consecutive Albumin domains span residues 19-211, 212-403, and 404-601; these read RGLF…ALKE, KALA…EFQP, and LVEE…KLVA. H27 is a Cu cation binding site. S29 is subject to Phosphoserine. Residues E30 and D37 each coordinate Ca(2+). C77 and C86 are disulfide-bonded. Phosphoserine is present on residues S82 and S89. A Zn(2+)-binding site is contributed by H91. 6 disulfide bridges follow: C99-C115, C114-C125, C148-C193, C192-C201, C224-C270, and C269-C277. Position 268 (E268) interacts with Ca(2+). Positions 271 and 273 each coordinate Zn(2+). Ca(2+)-binding residues include D273, E276, and D279. 8 disulfide bridges follow: C289–C303, C302–C313, C340–C385, C384–C393, C416–C462, C461–C472, C485–C501, and C500–C511. S297 is modified (phosphoserine). Phosphoserine is present on S443. Phosphothreonine is present on residues T444 and T446. K460 carries the post-translational modification N6-succinyllysine. Position 513 is a phosphoserine (S513). 2 cysteine pairs are disulfide-bonded: C538–C583 and C582–C591. K543 carries the post-translational modification N6-succinyllysine. K558 bears the N6-methyllysine mark. T570 is modified (phosphothreonine). K588 carries the post-translational modification N6-succinyllysine.

The protein belongs to the ALB/AFP/VDB family. Interacts with FCGRT; this interaction regulates ALB homeostasis. Interacts with TASOR. In plasma, occurs in a covalently-linked complex with chromophore-bound alpha-1-microglobulin; this interaction does not prevent fatty acid binding to ALB. Plasma.

It is found in the secreted. Its function is as follows. Binds water, Ca(2+), Na(+), K(+), fatty acids, hormones, bilirubin and drugs. Its main function is the regulation of the colloidal osmotic pressure of blood. Major zinc transporter in plasma, typically binds about 80% of all plasma zinc. Major calcium and magnesium transporter in plasma, binds approximately 45% of circulating calcium and magnesium in plasma. Potentially has more than two calcium-binding sites and might additionally bind calcium in a non-specific manner. The shared binding site between zinc and calcium at residue Asp-273 suggests a crosstalk between zinc and calcium transport in the blood. The rank order of affinity is zinc &gt; calcium &gt; magnesium. Binds to the bacterial siderophore enterobactin and inhibits enterobactin-mediated iron uptake of E.coli from ferric transferrin, and may thereby limit the utilization of iron and growth of enteric bacteria such as E.coli. Does not prevent iron uptake by the bacterial siderophore aerobactin. This is Albumin from Mesocricetus auratus (Golden hamster).